We begin with the raw amino-acid sequence, 267 residues long: NAD kinase (267 aa).

The active-site Proton acceptor is Asp-45. Residues 45-46 (DG), 121-122 (NE), Arg-147, Asp-149, 160-165 (TAYSKS), and Ala-184 each bind NAD(+).

This sequence belongs to the NAD kinase family. It depends on a divalent metal cation as a cofactor.

The protein resides in the cytoplasm. It catalyses the reaction NAD(+) + ATP = ADP + NADP(+) + H(+). Functionally, involved in the regulation of the intracellular balance of NAD and NADP, and is a key enzyme in the biosynthesis of NADP. Catalyzes specifically the phosphorylation on 2'-hydroxyl of the adenosine moiety of NAD to yield NADP. This chain is NAD kinase, found in Lactobacillus acidophilus (strain ATCC 700396 / NCK56 / N2 / NCFM).